We begin with the raw amino-acid sequence, 403 residues long: Lissencephaly-1 homolog 1 (403 aa).

One can recognise a LisH domain in the interval 7–38 (QRDELNQAIHQYLLISYQQSAQLFKTEAAVKD). Residues 51-87 (NSIVRLSKRVITLEQQVEQLNEQLAQAQAGKIQFNKS) are a coiled coil. 7 WD repeats span residues 103-142 (GHRA…FEKT), 145-184 (GHTS…CVKT), 187-226 (GHEH…CKKT), 229-270 (EHQE…HQLS), 271-327 (GHEH…NLFT), 330-369 (GHDN…QKKK), and 373-403 (AHDK…WLLS).

This sequence belongs to the WD repeat LIS1/nudF family.

It localises to the cytoplasm. The protein localises to the cytoskeleton. It is found in the microtubule organizing center. Its subcellular location is the centrosome. Functionally, positively regulates the activity of the minus-end directed microtubule motor protein dynein. May enhance dynein-mediated microtubule sliding by targeting dynein to the microtubule plus end. Required for several dynein- and microtubule-dependent processes. The protein is Lissencephaly-1 homolog 1 of Paramecium tetraurelia.